The following is a 545-amino-acid chain: Pentatricopeptide repeat-containing protein At4g18840 (545 aa).

11 PPR repeats span residues 104–138 (NGFTHNSVIRAYANSSTPEVALTVFREMLLGPVFP), 139–173 (DKYSFTFVLKACAAFCGFEEGRQIHGLFIKSGLVT), 174–204 (DVFVENTLVNVYGRSGYFEIARKVLDRMPVR), 205–239 (DAVSWNSLLSAYLEKGLVDEARALFDEMEERNVES), 240–266 (WNFMISGYAAAGLVKEAKEVFDSMPVR), 267–301 (DVVSWNAMVTAYAHVGCYNEVLEVFNKMLDDSTEK), 303–337 (DGFTLVSVLSACASLGSLSQGEWVHVYIDKHGIEI), 338–368 (EGFLATALVDMYSKCGKIDKALEVFRATSKR), 369–403 (DVSTWNSIISDLSVHGLGKDALEIFSEMVYEGFKP), 404–434 (NGITFIGVLSACNHVGMLDQARKLFEMMSSV), and 440–474 (TIEHYGCMVDLLGRMGKIEEAEELVNEIPADEASI). A type E motif region spans residues 475–545 (LLESLLGACK…ERVNRSLDVA (71 aa)).

The protein belongs to the PPR family. PCMP-E subfamily.

This Arabidopsis thaliana (Mouse-ear cress) protein is Pentatricopeptide repeat-containing protein At4g18840 (PCMP-E101).